Reading from the N-terminus, the 199-residue chain is Inner membrane-spanning protein YciB (199 aa).

The next 6 membrane-spanning stretches (helical) occupy residues 4 to 24 (FIDF…PRIV), 36 to 56 (IFSA…TLFL), 64 to 84 (GQWI…TFQS), 90 to 110 (WKAP…HFIG), 135 to 155 (LAWV…AFTF), and 162 to 182 (FKVF…GVFL).

Belongs to the YciB family.

The protein localises to the cell inner membrane. Its function is as follows. Plays a role in cell envelope biogenesis, maintenance of cell envelope integrity and membrane homeostasis. This is Inner membrane-spanning protein YciB from Azotobacter vinelandii (strain DJ / ATCC BAA-1303).